Reading from the N-terminus, the 117-residue chain is Large ribosomal subunit protein bL20 (117 aa).

This sequence belongs to the bacterial ribosomal protein bL20 family.

Functionally, binds directly to 23S ribosomal RNA and is necessary for the in vitro assembly process of the 50S ribosomal subunit. It is not involved in the protein synthesizing functions of that subunit. This is Large ribosomal subunit protein bL20 from Aliivibrio fischeri (strain ATCC 700601 / ES114) (Vibrio fischeri).